A 550-amino-acid polypeptide reads, in one-letter code: Hydroxylamine reductase (550 aa).

4 residues coordinate [2Fe-2S] cluster: Cys-3, Cys-6, Cys-18, and Cys-25. His-249, Glu-273, Cys-317, Cys-405, Cys-433, Cys-458, Glu-492, and Lys-494 together coordinate hybrid [4Fe-2O-2S] cluster. Cysteine persulfide is present on Cys-405.

The protein belongs to the HCP family. The cofactor is [2Fe-2S] cluster. Hybrid [4Fe-2O-2S] cluster serves as cofactor.

It localises to the cytoplasm. It catalyses the reaction A + NH4(+) + H2O = hydroxylamine + AH2 + H(+). Its function is as follows. Catalyzes the reduction of hydroxylamine to form NH(3) and H(2)O. This is Hydroxylamine reductase from Shigella flexneri serotype 5b (strain 8401).